We begin with the raw amino-acid sequence, 157 residues long: Transcriptional repressor NrdR (157 aa).

A zinc finger spans residues Cys3–Cys34. The 91-residue stretch at Leu49 to Val139 folds into the ATP-cone domain.

Belongs to the NrdR family. Requires Zn(2+) as cofactor.

Functionally, negatively regulates transcription of bacterial ribonucleotide reductase nrd genes and operons by binding to NrdR-boxes. The sequence is that of Transcriptional repressor NrdR from Latilactobacillus sakei subsp. sakei (strain 23K) (Lactobacillus sakei subsp. sakei).